Consider the following 200-residue polypeptide: MSGFKQHTGLVVPLDTANIDTDAIIPKQFLQKVNRIGFGKHLFHDWRFLDDAGEQPNPEFVMNAPRYQGATVLLARENFGCGSSREHAPWALADYGIQVMIAPSFADIFYGNSINNQMVPVRLTESEVDEIFQFVEANEGAEVTVDLEVMLVTANNKQYSFEIDEFRRHCLLNGLDNIGLTLQHADKISEYEAKIPSFLK.

It belongs to the LeuD family. LeuD type 1 subfamily. In terms of assembly, heterodimer of LeuC and LeuD.

The catalysed reaction is (2R,3S)-3-isopropylmalate = (2S)-2-isopropylmalate. It functions in the pathway amino-acid biosynthesis; L-leucine biosynthesis; L-leucine from 3-methyl-2-oxobutanoate: step 2/4. Functionally, catalyzes the isomerization between 2-isopropylmalate and 3-isopropylmalate, via the formation of 2-isopropylmaleate. This is 3-isopropylmalate dehydratase small subunit from Aliivibrio fischeri (strain MJ11) (Vibrio fischeri).